The primary structure comprises 696 residues: Divalent metal transporter 1 (696 aa).

Residues 1 to 31 (MHQDNSMRRAINQSRNGGSDSCDINNDREHD) are disordered. Residues 1 to 236 (MHQDNSMRRA…RSNRLSFMSK (236 aa)) lie on the Cytoplasmic side of the membrane. The segment covering 11–24 (INQSRNGGSDSCDI) has biased composition (polar residues). The helical transmembrane segment at 237-255 (LKMYFNYFGPGWIVAIAYL) threads the bilayer. At 256–288 (DPGNICGNLNVGLIRSDDFINVNSSVKDYTGYR) the chain is on the vacuolar side. Residue Asn278 is glycosylated (N-linked (GlcNAc...) asparagine). The chain crosses the membrane as a helical span at residues 289–311 (LLWVLVYGHILGFIFHTLSMKLG). Topologically, residues 312–331 (HITGLDLAALCRKEFSSKFS) are cytoplasmic. A helical transmembrane segment spans residues 332 to 357 (YFLYICVQIAIWGAHLQAIIGVFVAI). Residues 358 to 362 (NLILG) are Vacuolar-facing. Residues 363-382 (IPVKIAILYTLIEAFAYSFL) form a helical membrane-spanning segment. The Cytoplasmic portion of the chain corresponds to 383 to 393 (ENKSLDLLEKV). Residues 394 to 416 (LSLLIGILVCCFMFNVFMTPINF) traverse the membrane as a helical segment. Topologically, residues 417–435 (QEVASSILYPRIPKGKLLD) are vacuolar. A helical transmembrane segment spans residues 436–455 (TMGLLGSVISAHIFYLHSNL). Topologically, residues 456-475 (TSKKKPVIYNDRMVKRYNKL) are cytoplasmic. The helical transmembrane segment at 476–499 (GTIESGGSLLVSCITNCIIVLTFA) threads the bilayer. At 500 to 529 (EVNISGDDRKADYNLFNAYDVMKKYFGKTS) the chain is on the vacuolar side. N-linked (GlcNAc...) asparagine glycosylation occurs at Asn502. The chain crosses the membrane as a helical span at residues 530 to 546 (MYIWSFGLLSSGNNASF). Residues 547–566 (MCEYASKSVFEGFLNKNVNP) lie on the Cytoplasmic side of the membrane. Residues 567-585 (FFRVIFSRIILFIMLYAYV) traverse the membrane as a helical segment. At 586–596 (SYDKYTIDQLS) the chain is on the vacuolar side. A helical transmembrane segment spans residues 597-615 (NFINVVQILLLPLAIIPLY). The Cytoplasmic portion of the chain corresponds to 616–634 (RFSIHKNVLGKFAIKGAFK). A helical transmembrane segment spans residues 635-657 (YLVFVLVISIIVANFLLTLFDFL). The Vacuolar segment spans residues 658-662 (QYAPS). Residues 663–684 (NLYVIFIFISSIFYLLFIIYFF) traverse the membrane as a helical segment. At 685 to 696 (NMPITKTYYKDS) the chain is on the cytoplasmic side.

It belongs to the NRAMP (TC 2.A.55) family.

It is found in the vacuole membrane. It catalyses the reaction Fe(2+)(in) = Fe(2+)(out). Functionally, iron transporter. Required for parasite development during the blood stages. Required for full pathogenicity. This Plasmodium yoelii protein is Divalent metal transporter 1.